Consider the following 200-residue polypeptide: 3-isopropylmalate dehydratase small subunit (200 aa).

It belongs to the LeuD family. LeuD type 1 subfamily. Heterodimer of LeuC and LeuD.

It catalyses the reaction (2R,3S)-3-isopropylmalate = (2S)-2-isopropylmalate. It participates in amino-acid biosynthesis; L-leucine biosynthesis; L-leucine from 3-methyl-2-oxobutanoate: step 2/4. Catalyzes the isomerization between 2-isopropylmalate and 3-isopropylmalate, via the formation of 2-isopropylmaleate. The polypeptide is 3-isopropylmalate dehydratase small subunit (Campylobacter jejuni subsp. jejuni serotype O:6 (strain 81116 / NCTC 11828)).